We begin with the raw amino-acid sequence, 142 residues long: Photosystem II extrinsic protein U (142 aa).

The N-terminal stretch at 1–29 (MKGLVRLLTVFSLLLGCWGWLGTTQIAQA) is a signal peptide.

This sequence belongs to the PsbU family. As to quaternary structure, PSII is composed of 1 copy each of membrane proteins PsbA, PsbB, PsbC, PsbD, PsbE, PsbF, PsbH, PsbI, PsbJ, PsbK, PsbL, PsbM, PsbT, PsbX, PsbY, PsbZ, Psb30/Ycf12, peripheral proteins PsbO, CyanoQ (PsbQ), PsbU, PsbV and a large number of cofactors. It forms dimeric complexes.

It is found in the cellular thylakoid membrane. Its function is as follows. One of the extrinsic, lumenal subunits of photosystem II (PSII). PSII is a light-driven water plastoquinone oxidoreductase, using light energy to abstract electrons from H(2)O, generating a proton gradient subsequently used for ATP formation. The extrinsic proteins stabilize the structure of photosystem II oxygen-evolving complex (OEC), the ion environment of oxygen evolution and protect the OEC against heat-induced inactivation. The polypeptide is Photosystem II extrinsic protein U (Trichormus variabilis (strain ATCC 29413 / PCC 7937) (Anabaena variabilis)).